The sequence spans 84 residues: Tetrahydromethanopterin S-methyltransferase subunit G (84 aa).

The chain crosses the membrane as a helical span at residues 50–70 (IGILYGLVIGIILSYILPALI).

Belongs to the MtrG family. The complex is composed of 8 subunits; MtrA, MtrB, MtrC, MtrD, MtrE, MtrF, MtrG and MtrH.

Its subcellular location is the cell membrane. The enzyme catalyses 5-methyl-5,6,7,8-tetrahydromethanopterin + coenzyme M + 2 Na(+)(in) = 5,6,7,8-tetrahydromethanopterin + methyl-coenzyme M + 2 Na(+)(out). It participates in one-carbon metabolism; methanogenesis from CO(2); methyl-coenzyme M from 5,10-methylene-5,6,7,8-tetrahydromethanopterin: step 2/2. Its function is as follows. Part of a complex that catalyzes the formation of methyl-coenzyme M and tetrahydromethanopterin from coenzyme M and methyl-tetrahydromethanopterin. This is an energy-conserving, sodium-ion translocating step. The protein is Tetrahydromethanopterin S-methyltransferase subunit G of Methanocaldococcus jannaschii (strain ATCC 43067 / DSM 2661 / JAL-1 / JCM 10045 / NBRC 100440) (Methanococcus jannaschii).